Consider the following 827-residue polypeptide: Leucine--tRNA ligase (827 aa).

A 'HIGH' region motif is present at residues 42–52 (PYPSGKLHMGH). Residues 581 to 585 (KMSKS) carry the 'KMSKS' region motif. ATP is bound at residue Lys584.

It belongs to the class-I aminoacyl-tRNA synthetase family.

The protein resides in the cytoplasm. The catalysed reaction is tRNA(Leu) + L-leucine + ATP = L-leucyl-tRNA(Leu) + AMP + diphosphate. This Desulforamulus reducens (strain ATCC BAA-1160 / DSM 100696 / MI-1) (Desulfotomaculum reducens) protein is Leucine--tRNA ligase.